Reading from the N-terminus, the 96-residue chain is Co-chaperonin GroES (96 aa).

It belongs to the GroES chaperonin family. As to quaternary structure, heptamer of 7 subunits arranged in a ring. Interacts with the chaperonin GroEL.

Its subcellular location is the cytoplasm. Its function is as follows. Together with the chaperonin GroEL, plays an essential role in assisting protein folding. The GroEL-GroES system forms a nano-cage that allows encapsulation of the non-native substrate proteins and provides a physical environment optimized to promote and accelerate protein folding. GroES binds to the apical surface of the GroEL ring, thereby capping the opening of the GroEL channel. The polypeptide is Co-chaperonin GroES (Delftia acidovorans (strain DSM 14801 / SPH-1)).